The primary structure comprises 472 residues: Cysteine--tRNA ligase (472 aa).

Cys-28 contacts Zn(2+). The short motif at 30-40 (PTVYDYTHIGH) is the 'HIGH' region element. Cys-207, His-232, and Glu-236 together coordinate Zn(2+). Positions 264 to 268 (KMSKS) match the 'KMSKS' region motif. Lys-267 serves as a coordination point for ATP.

The protein belongs to the class-I aminoacyl-tRNA synthetase family. Zn(2+) serves as cofactor.

It is found in the cytoplasm. The enzyme catalyses tRNA(Cys) + L-cysteine + ATP = L-cysteinyl-tRNA(Cys) + AMP + diphosphate. This chain is Cysteine--tRNA ligase (cysS), found in Aeropyrum pernix (strain ATCC 700893 / DSM 11879 / JCM 9820 / NBRC 100138 / K1).